A 249-amino-acid chain; its full sequence is 2-C-methyl-D-erythritol 4-phosphate cytidylyltransferase (249 aa).

It belongs to the IspD/TarI cytidylyltransferase family. IspD subfamily.

It catalyses the reaction 2-C-methyl-D-erythritol 4-phosphate + CTP + H(+) = 4-CDP-2-C-methyl-D-erythritol + diphosphate. It functions in the pathway isoprenoid biosynthesis; isopentenyl diphosphate biosynthesis via DXP pathway; isopentenyl diphosphate from 1-deoxy-D-xylulose 5-phosphate: step 2/6. Its function is as follows. Catalyzes the formation of 4-diphosphocytidyl-2-C-methyl-D-erythritol from CTP and 2-C-methyl-D-erythritol 4-phosphate (MEP). This Chromohalobacter salexigens (strain ATCC BAA-138 / DSM 3043 / CIP 106854 / NCIMB 13768 / 1H11) protein is 2-C-methyl-D-erythritol 4-phosphate cytidylyltransferase.